The following is a 486-amino-acid chain: Glutamyl-tRNA(Gln) amidotransferase subunit A (486 aa).

Residues Lys75 and Ser150 each act as charge relay system in the active site. Ser174 functions as the Acyl-ester intermediate in the catalytic mechanism.

It belongs to the amidase family. GatA subfamily. Heterotrimer of A, B and C subunits.

It catalyses the reaction L-glutamyl-tRNA(Gln) + L-glutamine + ATP + H2O = L-glutaminyl-tRNA(Gln) + L-glutamate + ADP + phosphate + H(+). Allows the formation of correctly charged Gln-tRNA(Gln) through the transamidation of misacylated Glu-tRNA(Gln) in organisms which lack glutaminyl-tRNA synthetase. The reaction takes place in the presence of glutamine and ATP through an activated gamma-phospho-Glu-tRNA(Gln). This is Glutamyl-tRNA(Gln) amidotransferase subunit A from Nostoc sp. (strain PCC 7120 / SAG 25.82 / UTEX 2576).